The sequence spans 390 residues: Ketoisovalerate reductase BEA2 (390 aa).

70–75 lines the NADP(+) pocket; that stretch reads GPGNIG. Lysine 285 (proton donor) is an active-site residue. Asparagine 289 and asparagine 293 together coordinate substrate.

It belongs to the ketopantoate reductase family.

The catalysed reaction is (R)-2-hydroxy-3-methylbutanoate + NADP(+) = 3-methyl-2-oxobutanoate + NADPH + H(+). Its activity is regulated as follows. The reductase activity is increased by Mg(2+) (195%), Ca(2+) (169%) and slightly increased by K(+) (123%). The reduction activity is inhibited by Fe(2+) and Co(2+), and almost totally inhibited by Cu(2+), Mn(2+), Zn(2+) and Fe(3+) (from 3% to 9% residual activity respectively). The chelating agent EDTA had little effect, suggesting Mg(2+) and Ca(2+) are not determining factors, though they could promote the reductase enzyme activity. In terms of biological role, ketoisovalerate reductase; part of the gene cluster that mediates the biosynthesis of beauvericin (BEA), a non-ribosomal cyclic hexadepsipeptide that shows antibiotic, antifungal, insecticidal, and cancer cell antiproliferative and antihaptotactic activity. Ketoisovalerate reductase BEA2 catalyzes the NADPH-specific reduction of ketoisovaleric acid to hydroxyisovalerate, a precursor for beauvericin biosynthesis. The nonribosomal cyclodepsipeptide synthetase BEA1 then catalyzes the formation of beauvericin via condensation and cyclization of 3 dipeptidol monomers, each composed of one unit of hydroxyisovalerate and one unit of N-methyl-phenylalanine. This chain is Ketoisovalerate reductase BEA2, found in Gibberella intermedia (Bulb rot disease fungus).